The sequence spans 449 residues: Sensor histidine protein kinase/phosphatase WalK (449 aa).

The Extracellular segment spans residues 1 to 13; it reads MLDLLKQTIFTRD. A helical transmembrane segment spans residues 14–34; that stretch reads FIFILILLGFILVVTLLLLEN. The 53-residue stretch at 35–87 folds into the HAMP domain; sequence RRDNIQLKQINQKVKDLIAGDYSKVLDMQGGSEITNITNNLNDLSEVIRLTQE. Over 35–449 the chain is Cytoplasmic; sequence RRDNIQLKQI…EEVWEDEVED (415 aa). The PAS domain occupies 92–158; that stretch reads ESKRLNSILF…YELRDLITQS (67 aa). A PAC domain is found at 157 to 211; the sequence is QSPELLLDSQDINGEYLNLRVRFALIRRESGFISGLVAVLHDTTEQEKEERERRL. The Histidine kinase domain occupies 215-435; sequence NVSHELRTPL…TFTIVLPYDK (221 aa). Residue His218 is modified to Phosphohistidine.

May form homodimers. May interact with serine/threonine-protein kinase StkP; the interaction may play a role in regulating Walk signal transduction. Autophosphorylated.

It localises to the membrane. It carries out the reaction ATP + protein L-histidine = ADP + protein N-phospho-L-histidine.. In terms of biological role, member of the two-component regulatory system WalK/WalR that regulates genes involved in cell wall metabolism. Functions as a sensor protein kinase which is autophosphorylated at a histidine residue and transfers its phosphate group to WalR. In turn, WalR binds to the upstream promoter regions of target genes to positively and negatively regulate their expression. Required to maintain expression of WalRK regulon genes in exponentially growing cells, including peptidoglycan hydrolase pcsB. Phosphorylates WalR and also capable of dephosphorylation of WalR. WalK phosphatase activity is probably involved in preventing cross-talk from PnpS and other non-cognate sensor kinases during exponential growth. May be considered a potential virulence factor. The chain is Sensor histidine protein kinase/phosphatase WalK from Streptococcus pneumoniae serotype 2 (strain D39 / NCTC 7466).